Consider the following 473-residue polypeptide: Glutamate--tRNA ligase 1 (473 aa).

The short motif at 11 to 21 (PSPTGFLHIGG) is the 'HIGH' region element. The interval 111–132 (REQARKEGRPPRYDGRWRDRAE) is disordered. Positions 240 to 244 (KLSKR) match the 'KMSKS' region motif. Residue Lys243 coordinates ATP.

This sequence belongs to the class-I aminoacyl-tRNA synthetase family. Glutamate--tRNA ligase type 1 subfamily. As to quaternary structure, monomer.

The protein resides in the cytoplasm. The enzyme catalyses tRNA(Glu) + L-glutamate + ATP = L-glutamyl-tRNA(Glu) + AMP + diphosphate. In terms of biological role, catalyzes the attachment of glutamate to tRNA(Glu) in a two-step reaction: glutamate is first activated by ATP to form Glu-AMP and then transferred to the acceptor end of tRNA(Glu). In Beijerinckia indica subsp. indica (strain ATCC 9039 / DSM 1715 / NCIMB 8712), this protein is Glutamate--tRNA ligase 1.